Here is a 795-residue protein sequence, read N- to C-terminus: Protein ROOT HAIR DEFECTIVE 3 homolog 1 (795 aa).

Residues 1 to 682 are Cytoplasmic-facing; that stretch reads MDADKSEGCC…EANRRGNNWL (682 aa). A GB1/RHD3-type G domain is found at 39-254; it reads GLSYAVVSIM…IAPGGLAGDR (216 aa). Position 49–56 (49–56) interacts with GTP; that stretch reads GPQSSGKS. Positions 218 to 244 form a coiled coil; the sequence is VALSSYEEKEEQFKEQIASLRQRFMHS. The helical transmembrane segment at 683–703 threads the bilayer; that stretch reads PPPWAILALIVLGFNEFMTLL. The Lumenal portion of the chain corresponds to 704–706; that stretch reads RNP. A helical transmembrane segment spans residues 707-727; sequence LYLGVMFVAFLLAKALWTQLD. Residues 728-795 lie on the Cytoplasmic side of the membrane; the sequence is IPGEFRNGAL…PDHKSSSKED (68 aa). A disordered region spans residues 761 to 795; that stretch reads QGEDPPAANPENRRSSNNTSSSENPPDHKSSSKED. Residues 775 to 784 show a composition bias toward low complexity; it reads SSNNTSSSEN. Positions 785–795 are enriched in basic and acidic residues; it reads PPDHKSSSKED.

Belongs to the TRAFAC class dynamin-like GTPase superfamily. GB1/RHD3 GTPase family. RHD3 subfamily. Specifically expressed in flowers.

Its subcellular location is the endoplasmic reticulum membrane. Its function is as follows. Probable GTP-binding protein that may be involved in cell development. The sequence is that of Protein ROOT HAIR DEFECTIVE 3 homolog 1 from Arabidopsis thaliana (Mouse-ear cress).